The sequence spans 498 residues: ATP synthase subunit beta, chloroplastic (498 aa).

Residue 172–179 (GGAGVGKT) coordinates ATP.

This sequence belongs to the ATPase alpha/beta chains family. As to quaternary structure, F-type ATPases have 2 components, CF(1) - the catalytic core - and CF(0) - the membrane proton channel. CF(1) has five subunits: alpha(3), beta(3), gamma(1), delta(1), epsilon(1). CF(0) has four main subunits: a(1), b(1), b'(1) and c(9-12).

The protein resides in the plastid. It localises to the chloroplast thylakoid membrane. The enzyme catalyses ATP + H2O + 4 H(+)(in) = ADP + phosphate + 5 H(+)(out). Functionally, produces ATP from ADP in the presence of a proton gradient across the membrane. The catalytic sites are hosted primarily by the beta subunits. The chain is ATP synthase subunit beta, chloroplastic from Phoenix dactylifera (Date palm).